A 238-amino-acid chain; its full sequence is Purine nucleoside phosphorylase DeoD-type (238 aa).

His-4 is a binding site for a purine D-ribonucleoside. Residues Gly-20, Arg-24, Arg-43, and 87-90 each bind phosphate; that span reads RIGS. A purine D-ribonucleoside-binding positions include 181 to 183 and 205 to 206; these read EME and SD. The active-site Proton donor is the Asp-206.

Belongs to the PNP/UDP phosphorylase family. Homohexamer; trimer of homodimers.

The enzyme catalyses a purine D-ribonucleoside + phosphate = a purine nucleobase + alpha-D-ribose 1-phosphate. The catalysed reaction is a purine 2'-deoxy-D-ribonucleoside + phosphate = a purine nucleobase + 2-deoxy-alpha-D-ribose 1-phosphate. Functionally, catalyzes the reversible phosphorolytic breakdown of the N-glycosidic bond in the beta-(deoxy)ribonucleoside molecules, with the formation of the corresponding free purine bases and pentose-1-phosphate. This chain is Purine nucleoside phosphorylase DeoD-type, found in Mycoplasma pneumoniae (strain ATCC 29342 / M129 / Subtype 1) (Mycoplasmoides pneumoniae).